Reading from the N-terminus, the 659-residue chain is UvrABC system protein B (659 aa).

In terms of domain architecture, Helicase ATP-binding spans Q25–R412. G38–T45 serves as a coordination point for ATP. Positions Y91–I114 match the Beta-hairpin motif. A Helicase C-terminal domain is found at Q429–I582. Residues E622–N657 form the UVR domain.

It belongs to the UvrB family. In terms of assembly, forms a heterotetramer with UvrA during the search for lesions. Interacts with UvrC in an incision complex.

It localises to the cytoplasm. The UvrABC repair system catalyzes the recognition and processing of DNA lesions. A damage recognition complex composed of 2 UvrA and 2 UvrB subunits scans DNA for abnormalities. Upon binding of the UvrA(2)B(2) complex to a putative damaged site, the DNA wraps around one UvrB monomer. DNA wrap is dependent on ATP binding by UvrB and probably causes local melting of the DNA helix, facilitating insertion of UvrB beta-hairpin between the DNA strands. Then UvrB probes one DNA strand for the presence of a lesion. If a lesion is found the UvrA subunits dissociate and the UvrB-DNA preincision complex is formed. This complex is subsequently bound by UvrC and the second UvrB is released. If no lesion is found, the DNA wraps around the other UvrB subunit that will check the other stand for damage. The protein is UvrABC system protein B of Clostridium perfringens (strain 13 / Type A).